The chain runs to 1025 residues: Presequence protease, mitochondrial (1025 aa).

H90 is a binding site for Zn(2+). The active-site Proton acceptor is E93. H94 provides a ligand contact to Zn(2+). Residue E166 is part of the active site. Position 197 (E197) interacts with Zn(2+).

The protein belongs to the peptidase M16 family. PreP subfamily. In terms of assembly, monomer and homodimer; homodimerization is induced by binding of the substrate. The cofactor is Zn(2+).

The protein localises to the mitochondrion intermembrane space. It localises to the mitochondrion matrix. Degrades mitochondrial transit peptides after their cleavage in the intermembrane space or in the matrix, and presequence peptides; clearance of these peptides is required to keep the presequence processing machinery running. Preferentially cleaves the N-terminal side of paired basic amino acid residues. Also degrades other unstructured peptides. May function as an ATP-dependent peptidase as opposed to a metalloendopeptidase. The sequence is that of Presequence protease, mitochondrial (cym1) from Aspergillus oryzae (strain ATCC 42149 / RIB 40) (Yellow koji mold).